Here is a 243-residue protein sequence, read N- to C-terminus: Proteasome subunit beta (243 aa).

Positions 1–16 (MRAPQHNSDFSRTVNQ) are enriched in polar residues. A disordered region spans residues 1-29 (MRAPQHNSDFSRTVNQLADDPNPYEPEVG). Residues 1-48 (MRAPQHNSDFSRTVNQLADDPNPYEPEVGSMPKNEFSRADLDNVNKTG) constitute a propeptide, removed in mature form; by autocatalysis. The active-site Nucleophile is the Thr49.

This sequence belongs to the peptidase T1B family. As to quaternary structure, the 20S proteasome core is composed of 14 alpha and 14 beta subunits that assemble into four stacked heptameric rings, resulting in a barrel-shaped structure. The two inner rings, each composed of seven catalytic beta subunits, are sandwiched by two outer rings, each composed of seven alpha subunits. The catalytic chamber with the active sites is on the inside of the barrel. Has a gated structure, the ends of the cylinder being occluded by the N-termini of the alpha-subunits. Is capped at one or both ends by the proteasome regulatory ATPase, PAN.

The protein resides in the cytoplasm. The enzyme catalyses Cleavage of peptide bonds with very broad specificity.. Its activity is regulated as follows. The formation of the proteasomal ATPase PAN-20S proteasome complex, via the docking of the C-termini of PAN into the intersubunit pockets in the alpha-rings, triggers opening of the gate for substrate entry. Interconversion between the open-gate and close-gate conformations leads to a dynamic regulation of the 20S proteasome proteolysis activity. Functionally, component of the proteasome core, a large protease complex with broad specificity involved in protein degradation. The chain is Proteasome subunit beta from Natrialba magadii (strain ATCC 43099 / DSM 3394 / CCM 3739 / CIP 104546 / IAM 13178 / JCM 8861 / NBRC 102185 / NCIMB 2190 / MS3) (Natronobacterium magadii).